A 178-amino-acid chain; its full sequence is Disulfide bond formation protein B (178 aa).

Over 1-14 the chain is Cytoplasmic; sequence MLSFFKTLSMGRSG. Residues 15–31 form a helical membrane-spanning segment; it reads WLLLAFSALVLELVALY. The Periplasmic portion of the chain corresponds to 32 to 49; sequence FQYGMQLQPCVMCVYERV. An intrachain disulfide couples cysteine 41 to cysteine 44. A helical transmembrane segment spans residues 50-65; the sequence is ALGGILFAGIIGAIAP. The Cytoplasmic portion of the chain corresponds to 66–72; sequence SSWFFRF. The helical transmembrane segment at 73-90 threads the bilayer; sequence LGIIIGLGASVKGFLLAL. At 91-145 the chain is on the periplasmic side; that stretch reads KHVDYQLNPAPWNQCAYLPEFPQTLPLDQWFPYLFKPIGSCSDIQWSFLGFSMAQ. Cysteine 105 and cysteine 131 form a disulfide bridge. The chain crosses the membrane as a helical span at residues 146-164; sequence WILVMFAFYSILLAIILIS. Residues 165 to 178 are Cytoplasmic-facing; that stretch reads QVKAGKPKHREIFR.

Belongs to the DsbB family.

The protein resides in the cell inner membrane. Functionally, required for disulfide bond formation in some periplasmic proteins. Acts by oxidizing the DsbA protein. This chain is Disulfide bond formation protein B, found in Mannheimia succiniciproducens (strain KCTC 0769BP / MBEL55E).